A 201-amino-acid polypeptide reads, in one-letter code: 3-isopropylmalate dehydratase small subunit (201 aa).

Belongs to the LeuD family. LeuD type 1 subfamily. In terms of assembly, heterodimer of LeuC and LeuD.

The enzyme catalyses (2R,3S)-3-isopropylmalate = (2S)-2-isopropylmalate. The protein operates within amino-acid biosynthesis; L-leucine biosynthesis; L-leucine from 3-methyl-2-oxobutanoate: step 2/4. Catalyzes the isomerization between 2-isopropylmalate and 3-isopropylmalate, via the formation of 2-isopropylmaleate. This is 3-isopropylmalate dehydratase small subunit from Rhodopseudomonas palustris (strain BisA53).